A 107-amino-acid chain; its full sequence is Iron-sulfur cluster assembly protein CyaY (107 aa).

This sequence belongs to the frataxin family.

In terms of biological role, involved in iron-sulfur (Fe-S) cluster assembly. May act as a regulator of Fe-S biogenesis. This is Iron-sulfur cluster assembly protein CyaY from Neisseria meningitidis serogroup B (strain ATCC BAA-335 / MC58).